Here is a 371-residue protein sequence, read N- to C-terminus: Protein MxiG (371 aa).

A helical membrane pass occupies residues Val127–Phe141.

The protein localises to the cell inner membrane. It is found in the cell outer membrane. In terms of biological role, involved in the secretion of the Ipa antigens. Involved in the intracellular dissemination of Shigella. Part of the Mxi-Spa secretion apparatus. The polypeptide is Protein MxiG (mxiG) (Shigella flexneri).